Reading from the N-terminus, the 282-residue chain is Halorhodopsin (282 aa).

Residues 1-29 (MMETAADALASGTVPLEMTQTQIFEAIQG) are Extracellular-facing. Residues 30 to 55 (DTLLASSLWINIALAGLSILLFVYMG) form a helical membrane-spanning segment. Residues 56–61 (RNLEDP) lie on the Cytoplasmic side of the membrane. The chain crosses the membrane as a helical span at residues 62 to 85 (RAQLIFVATLMVPLVSISSYTGLV). At 86–109 (SGLTVSFLEMPAGHALAGQEVLTP) the chain is on the extracellular side. The helical transmembrane segment at 110–131 (WGRYLTWALSTPMILVALGLLA) threads the bilayer. Residues 132–134 (GSN) lie on the Cytoplasmic side of the membrane. The chain crosses the membrane as a helical span at residues 135–158 (ATKLFTAVTADIGMCVTGLAAALT). The Extracellular portion of the chain corresponds to 159 to 161 (TSS). Residues 162–184 (YLLRWVWYVISCAFFVVVLYVLL) traverse the membrane as a helical segment. Over 185-196 (AEWAEDAEVAGT) the chain is Cytoplasmic. The helical transmembrane segment at 197–220 (AEIFNTLKLLTVVLWLGYPIFWAL) threads the bilayer. The Extracellular portion of the chain corresponds to 221 to 229 (GAEGLAVLD). Residues 230 to 258 (VAVTSWAYSGMDIVAKYLFAFLLLRWVVD) traverse the membrane as a helical segment. Lys245 carries the N6-(retinylidene)lysine modification. At 259-282 (NERTVAGMAAGLGAPLARCAPADD) the chain is on the cytoplasmic side.

Belongs to the archaeal/bacterial/fungal opsin family.

The protein resides in the cell membrane. Its function is as follows. Light-driven chloride pump. This chain is Halorhodopsin (hop), found in Halorubrum sodomense.